The chain runs to 234 residues: LexA repressor (234 aa).

The segment covering 1–11 (MNEATSHEGPK) has biased composition (basic and acidic residues). Positions 1–34 (MNEATSHEGPKRSLPGRPPGIRADSSGLTDRQRR) are disordered. Residues 52–72 (MREIGQAVGLSSTSSVAHQLM) constitute a DNA-binding region (H-T-H motif). Over residues 83–94 (DPHRPRAYEVRG) the composition is skewed to basic and acidic residues. The interval 83 to 109 (DPHRPRAYEVRGSDQSSSVQPTDTAGK) is disordered. The span at 95-105 (SDQSSSVQPTD) shows a compositional bias: polar residues. Residues serine 158 and lysine 195 each act as for autocatalytic cleavage activity in the active site.

This sequence belongs to the peptidase S24 family. In terms of assembly, homodimer.

The catalysed reaction is Hydrolysis of Ala-|-Gly bond in repressor LexA.. Represses a number of genes involved in the response to DNA damage (SOS response), including recA and lexA. In the presence of single-stranded DNA, RecA interacts with LexA causing an autocatalytic cleavage which disrupts the DNA-binding part of LexA, leading to derepression of the SOS regulon and eventually DNA repair. This chain is LexA repressor, found in Streptomyces avermitilis (strain ATCC 31267 / DSM 46492 / JCM 5070 / NBRC 14893 / NCIMB 12804 / NRRL 8165 / MA-4680).